The primary structure comprises 143 residues: Sperm mitochondrial-associated cysteine-rich protein (143 aa).

Phosphoserine is present on residues serine 37, serine 44, and serine 110. Residues 101–143 (CCSSENKTESDSDTSGQTLEKGSQSPQSPPGAQGNWNQKKSNK) form a disordered region. Polar residues predominate over residues 113–126 (DTSGQTLEKGSQSP). Residue serine 128 is modified to Phosphoserine. Over residues 134–143 (GNWNQKKSNK) the composition is skewed to polar residues.

As to expression, testis. Is selectively expressed in the spermatids of seminiferous tubules.

It localises to the cytoplasm. The protein localises to the mitochondrion membrane. Involved in sperm motility. Its absence is associated with genetic background dependent male infertility. Infertility may be due to reduced sperm motility in the female reproductive tract and inability to penetrate the oocyte zona pellucida. In Mus musculus (Mouse), this protein is Sperm mitochondrial-associated cysteine-rich protein (Smcp).